The sequence spans 101 residues: Interleukin-8 (101 aa).

Residues 1–22 form the signal peptide; that stretch reads MTSKLAVALLAAFLLSAALCEA. Disulfide bonds link C34–C61 and C36–C77.

This sequence belongs to the intercrine alpha (chemokine CxC) family. Homodimer. Interacts with TNFAIP6 (via Link domain); this interaction interferes with chemokine binding to glycosaminoglycans.

It is found in the secreted. Functionally, chemotactic factor that mediates inflammatory response by attracting neutrophils, basophils, and T-cells to clear pathogens and protect the host from infection. Also plays an important role in neutrophil activation. Released in response to an inflammatory stimulus, exerts its effect by binding to the G-protein-coupled receptors CXCR1 and CXCR2, primarily found in neutrophils, monocytes and endothelial cells. G-protein heterotrimer (alpha, beta, gamma subunits) constitutively binds to CXCR1/CXCR2 receptor and activation by IL8 leads to beta and gamma subunits release from Galpha (GNAI2 in neutrophils) and activation of several downstream signaling pathways including PI3K and MAPK pathways. The sequence is that of Interleukin-8 (CXCL8) from Bos taurus (Bovine).